Here is a 571-residue protein sequence, read N- to C-terminus: Probable pectinesterase/pectinesterase inhibitor 58 (571 aa).

A signal peptide spans 1–28 (MGVDGELKKKKCIIAGVITALLVLMVVA). N-linked (GlcNAc...) asparagine glycans are attached at residues Asn36, Asn91, Asn207, and Asn216. Residues 49–204 (KTATTAVEAV…RELTSNGLAM (156 aa)) are pectinesterase inhibitor 58. A pectinesterase 58 region spans residues 259–556 (NVVVAHDGSG…FTPARFLRGN (298 aa)). Substrate is bound at residue Thr335. Asn347 carries an N-linked (GlcNAc...) asparagine glycan. Gln365 contacts substrate. The Proton donor; for pectinesterase activity role is filled by Asp388. A disulfide bridge links Cys402 with Cys422. Catalysis depends on Asp409, which acts as the Nucleophile; for pectinesterase activity. 2 residues coordinate substrate: Arg477 and Trp479.

It in the N-terminal section; belongs to the PMEI family. This sequence in the C-terminal section; belongs to the pectinesterase family. As to expression, expressed in siliques, but not in flower buds.

Its subcellular location is the secreted. It localises to the cell wall. It catalyses the reaction [(1-&gt;4)-alpha-D-galacturonosyl methyl ester](n) + n H2O = [(1-&gt;4)-alpha-D-galacturonosyl](n) + n methanol + n H(+). It participates in glycan metabolism; pectin degradation; 2-dehydro-3-deoxy-D-gluconate from pectin: step 1/5. Acts in the modification of cell walls via demethylesterification of cell wall pectin. The chain is Probable pectinesterase/pectinesterase inhibitor 58 (PME58) from Arabidopsis thaliana (Mouse-ear cress).